The following is a 535-amino-acid chain: Palmdelphin (535 aa).

Positions 1-105 (MEEAELLKER…KEELQVSTKE (105 aa)) form a coiled coil. A disordered region spans residues 423–450 (VVIDDDDDDDDDEEADKKGEENTKESVS). Over residues 424–436 (VIDDDDDDDDDEE) the composition is skewed to acidic residues. Residues 437 to 446 (ADKKGEENTK) show a composition bias toward basic and acidic residues.

Belongs to the paralemmin family.

The protein resides in the cytoplasm. The protein localises to the cell projection. It localises to the dendrite. Its subcellular location is the dendritic spine. This chain is Palmdelphin (palmd), found in Xenopus laevis (African clawed frog).